A 142-amino-acid chain; its full sequence is Alpha-lactalbumin (142 aa).

A signal peptide spans 1 to 18 (MMSFVSLLLVGILFHATQ). Positions 20-142 (EQLTKCEVFR…KLDQWLCEKL (123 aa)) constitute a C-type lysozyme domain. 4 cysteine pairs are disulfide-bonded: Cys-25–Cys-139, Cys-47–Cys-130, Cys-80–Cys-96, and Cys-92–Cys-110. 2 N-linked (GlcNAc...) asparagine glycosylation sites follow: Asn-64 and Asn-93. Ca(2+)-binding residues include Lys-98, Asp-101, Asp-103, Asp-106, and Asp-107.

Belongs to the glycosyl hydrolase 22 family. In terms of assembly, lactose synthase (LS) is a heterodimer of a catalytic component, beta1,4-galactosyltransferase (beta4Gal-T1) and a regulatory component, alpha-lactalbumin (LA). In terms of tissue distribution, mammary gland specific. Secreted in milk.

It is found in the secreted. Its function is as follows. Regulatory subunit of lactose synthase, changes the substrate specificity of galactosyltransferase in the mammary gland making glucose a good acceptor substrate for this enzyme. This enables LS to synthesize lactose, the major carbohydrate component of milk. In other tissues, galactosyltransferase transfers galactose onto the N-acetylglucosamine of the oligosaccharide chains in glycoproteins. This is Alpha-lactalbumin (LALBA) from Bubalus bubalis (Domestic water buffalo).